Here is an 87-residue protein sequence, read N- to C-terminus: Acyl-CoA-binding protein (87 aa).

Ser-2 carries the post-translational modification N-acetylserine. The 86-residue stretch at 2–87 folds into the ACB domain; sequence SQAEFEKAAE…VEELKKKYGI (86 aa). Lys-8 is modified (N6-acetyllysine; alternate). Lys-8 carries the post-translational modification N6-succinyllysine; alternate. Lys-14 lines the an acyl-CoA pocket. An N6-succinyllysine modification is found at Lys-17. At Lys-19 the chain carries N6-acetyllysine. Residue Tyr-29 is modified to Phosphotyrosine. An acyl-CoA contacts are provided by residues 29 to 33, Lys-51, Lys-55, and Tyr-74; that span reads YSHYK. The residue at position 51 (Lys-51) is an N6-acetyllysine. Lys-55 carries the N6-acetyllysine; alternate modification. Lys-55 carries the N6-succinyllysine; alternate modification. An N6-(2-hydroxyisobutyryl)lysine; alternate modification is found at Lys-55. Residue Lys-55 is modified to N6-malonyllysine; alternate. An N6-acetyllysine; alternate modification is found at Lys-77. Lys-77 carries the post-translational modification N6-succinyllysine; alternate.

The protein belongs to the ACBP family. In terms of assembly, monomer.

Its subcellular location is the endoplasmic reticulum. It localises to the golgi apparatus. Functionally, binds medium- and long-chain acyl-CoA esters with very high affinity and may function as an intracellular carrier of acyl-CoA esters. It is also able to displace diazepam from the benzodiazepine (BZD) recognition site located on the GABA type A receptor. It is therefore possible that this protein also acts as a neuropeptide to modulate the action of the GABA receptor. Its function is as follows. DBI(32-86) has antibacterial properties. The chain is Acyl-CoA-binding protein (DBI) from Sus scrofa (Pig).